A 356-amino-acid polypeptide reads, in one-letter code: Tricetin 3',4',5'-O-trimethyltransferase (356 aa).

123-129 lines the substrate pocket; that stretch reads MNQDKVL. The segment at 155 to 173 is substrate binding; it reads AFEYHGTDPRFNRVFNEGM. S-adenosyl-L-methionine contacts are provided by Gly-201, Asp-224, Asp-244, Met-245, and Lys-258. His-262 serves as the catalytic Proton acceptor.

The protein belongs to the class I-like SAM-binding methyltransferase superfamily. Cation-independent O-methyltransferase family. COMT subfamily. As to quaternary structure, homodimer. The monomer is fully active and dimerization is not required for sequential methylation. Expressed in roots, stems and leaves.

It carries out the reaction tricetin + 3 S-adenosyl-L-methionine = 3',4',5'-O-trimethyltricetin + 3 S-adenosyl-L-homocysteine + 3 H(+). Its function is as follows. Flavonoid B-ring-specific O-methyltransferase with a preference for flavones &gt; dihydroflavones &gt; flavonols that possess at least two B-ring hydroxyl groups. Active with tricetin, 5-hydroxyferulic acid, luteolin, quercitin, eriodictyol, quercetagetin, taxifolin, gossypetin and myricetin. No activity with naringenin, apigenin, kaempferol, 7,8-dihydroxy- or 5,7,8-trihydroxy flavones, chlorogenic acid, gallic acid or daphnetin. Catalyzes the sequential O-methylation of tricetin via 3'-O-methyltricetin, 3',5'-O-methyltricetin to 3',4',5'-O-trimethyltricetin. May also be involved in S lignin biosynthesis. The sequence is that of Tricetin 3',4',5'-O-trimethyltransferase (OMT2) from Triticum aestivum (Wheat).